The sequence spans 289 residues: tRNA U34 carboxymethyltransferase (289 aa).

Residues lysine 60, tryptophan 74, lysine 79, glycine 98, aspartate 120–serine 122, valine 147–glutamate 148, tyrosine 167, and arginine 282 contribute to the carboxy-S-adenosyl-L-methionine site.

This sequence belongs to the class I-like SAM-binding methyltransferase superfamily. CmoB family. Homotetramer.

The enzyme catalyses carboxy-S-adenosyl-L-methionine + 5-hydroxyuridine(34) in tRNA = 5-carboxymethoxyuridine(34) in tRNA + S-adenosyl-L-homocysteine + H(+). In terms of biological role, catalyzes carboxymethyl transfer from carboxy-S-adenosyl-L-methionine (Cx-SAM) to 5-hydroxyuridine (ho5U) to form 5-carboxymethoxyuridine (cmo5U) at position 34 in tRNAs. This Campylobacter concisus (strain 13826) protein is tRNA U34 carboxymethyltransferase.